A 63-amino-acid chain; its full sequence is Large ribosomal subunit protein uL29 (63 aa).

Belongs to the universal ribosomal protein uL29 family.

This chain is Large ribosomal subunit protein uL29 (rpmC), found in Buchnera aphidicola subsp. Acyrthosiphon kondoi (Acyrthosiphon kondoi symbiotic bacterium).